We begin with the raw amino-acid sequence, 399 residues long: Tyrosine--tRNA ligase (399 aa).

Residues 42–51 carry the 'HIGH' region motif; it reads PTAPDLHLGH. The 'KMSKS' region motif lies at 226–230; sequence KMSKS. K229 contacts ATP. The region spanning 337–398 is the S4 RNA-binding domain; that stretch reads LPVFQVVKQA…GKRKFASVVL (62 aa).

It belongs to the class-I aminoacyl-tRNA synthetase family. TyrS type 2 subfamily. As to quaternary structure, homodimer.

The protein localises to the cytoplasm. The catalysed reaction is tRNA(Tyr) + L-tyrosine + ATP = L-tyrosyl-tRNA(Tyr) + AMP + diphosphate + H(+). Functionally, catalyzes the attachment of tyrosine to tRNA(Tyr) in a two-step reaction: tyrosine is first activated by ATP to form Tyr-AMP and then transferred to the acceptor end of tRNA(Tyr). The sequence is that of Tyrosine--tRNA ligase from Aromatoleum aromaticum (strain DSM 19018 / LMG 30748 / EbN1) (Azoarcus sp. (strain EbN1)).